Consider the following 142-residue polypeptide: Large-conductance mechanosensitive channel (142 aa).

Helical transmembrane passes span 14 to 34 and 86 to 106; these read VVDL…VSSL and FGQF…VFLV.

The protein belongs to the MscL family. Homopentamer.

It is found in the cell inner membrane. Functionally, channel that opens in response to stretch forces in the membrane lipid bilayer. May participate in the regulation of osmotic pressure changes within the cell. In Rhizorhabdus wittichii (strain DSM 6014 / CCUG 31198 / JCM 15750 / NBRC 105917 / EY 4224 / RW1) (Sphingomonas wittichii), this protein is Large-conductance mechanosensitive channel.